The following is a 766-amino-acid chain: Deoxynucleotidyltransferase terminal-interacting protein 2 (766 aa).

The interval 1–99 is disordered; that stretch reads MVVTRSARPQ…DCSSVPEVQD (99 aa). 2 stretches are compositionally biased toward polar residues: residues 13 to 28 and 42 to 56; these read NEAT…NSAV and SPDN…TTPE. Thr127 is modified (phosphothreonine). 3 positions are modified to phosphoserine: Ser139, Ser143, and Ser146. The disordered stretch occupies residues 155-175; it reads TEITTRRSKAKSQREPKQESH. Residues 166 to 175 are compositionally biased toward basic and acidic residues; the sequence is SQREPKQESH. Phosphoserine occurs at positions 180 and 190. Lys217 is covalently cross-linked (Glycyl lysine isopeptide (Lys-Gly) (interchain with G-Cter in SUMO2)). Position 229 is a phosphothreonine (Thr229). Residues Ser236, Ser248, and Ser250 each carry the phosphoserine modification. Lys254 is covalently cross-linked (Glycyl lysine isopeptide (Lys-Gly) (interchain with G-Cter in SUMO2)). Ser258 is modified (phosphoserine). Residue Lys327 forms a Glycyl lysine isopeptide (Lys-Gly) (interchain with G-Cter in SUMO2) linkage. Ser334 bears the Phosphoserine mark. Disordered regions lie at residues 345 to 367, 390 to 450, and 520 to 557; these read VSQR…LNHE, KNAI…KDDS, and KAGE…DEDN. Lys394 participates in a covalent cross-link: Glycyl lysine isopeptide (Lys-Gly) (interchain with G-Cter in SUMO2). A compositionally biased stretch (basic and acidic residues) spans 421–434; it reads DMSKEKEVDSESDT. Positions 435–444 are enriched in polar residues; that stretch reads KPSNLEFNTT. Residues 515 to 552 adopt a coiled-coil conformation; the sequence is LDEEDKAGEVATEEEEEEEEEESEEELSDHDRNKDNEF. Over residues 520-542 the composition is skewed to acidic residues; that stretch reads KAGEVATEEEEEEEEEESEEELS. A tdBR region; mediates interaction with DNTT region spans residues 558–615; it reads LLSNTKSKLLKLMSSSIDTGLNIKELGGLYINFNADKVQLNKRTLTQMKEKRKDELLQ. Glycyl lysine isopeptide (Lys-Gly) (interchain with G-Cter in SUMO2) cross-links involve residues Lys568, Lys594, and Lys616. Thr620 is modified (phosphothreonine). Glycyl lysine isopeptide (Lys-Gly) (interchain with G-Cter in SUMO2) cross-links involve residues Lys636, Lys659, Lys668, Lys696, and Lys741.

As to quaternary structure, forms a ternary complex with DNTT and core histone; interaction with PCNA releases DNTT and H2A/H2B histones from this ternary complex. Interacts with ESR1, ESR2, PPARG and RXRA. Part of the small subunit (SSU) processome, composed of more than 70 proteins and the RNA chaperone small nucleolar RNA (snoRNA) U3.

Its subcellular location is the nucleus. The protein localises to the nucleolus. Regulates the transcriptional activity of DNTT and ESR1. May function as a chromatin remodeling protein. Part of the small subunit (SSU) processome, first precursor of the small eukaryotic ribosomal subunit. During the assembly of the SSU processome in the nucleolus, many ribosome biogenesis factors, an RNA chaperone and ribosomal proteins associate with the nascent pre-rRNA and work in concert to generate RNA folding, modifications, rearrangements and cleavage as well as targeted degradation of pre-ribosomal RNA by the RNA exosome. This chain is Deoxynucleotidyltransferase terminal-interacting protein 2 (DNTTIP2), found in Bos taurus (Bovine).